Here is a 421-residue protein sequence, read N- to C-terminus: MSKTHLTEQKFSDFALHPKVIEALENKGFHNCTPIQALALPLTLAGRDVAGQAQTGTGKTMAFLTSSFHYLLSHPAIDDRKVNQPRALIMAPTRELAVQIHADAEPLAQTTGLKLGLAYGGDGYDKQLKVLESGVDILIGTTGRLIDYAKQNHINLGAIQVVVLDEADRMYDLGFIKDIRWLFRRMPPANQRLNMLFSATLSYRVRELAFEQMNNAEYVEVEPEQKTGHRIKEELFYPSNEEKMRLLQTLIEEEWPDRAIVFANTKHRCEDIWGHLAADGHRVGLLTGDVAQKKRLRILDEFTRGDLDILVATDVAARGLHIPAVTHVFNYDLPDDCEDYVHRIGRTGRAGASGHSISLACEEYALNLPAIEAYIGHSIPVSKYNPEALMTNLPKPLRLTRSRPGNGPRRTGAPRNRRRSG.

The Q motif motif lies at 9–37 (QKFSDFALHPKVIEALENKGFHNCTPIQA). Residues 40–219 (LPLTLAGRDV…FEQMNNAEYV (180 aa)) form the Helicase ATP-binding domain. Position 53–60 (53–60 (AQTGTGKT)) interacts with ATP. The DEAD box signature appears at 165–168 (DEAD). The Helicase C-terminal domain maps to 245–390 (RLLQTLIEEE…VSKYNPEALM (146 aa)). A disordered region spans residues 393–421 (LPKPLRLTRSRPGNGPRRTGAPRNRRRSG). The segment covering 403 to 414 (RPGNGPRRTGAP) has biased composition (low complexity).

The protein belongs to the DEAD box helicase family. RhlB subfamily. As to quaternary structure, component of the RNA degradosome, which is a multiprotein complex involved in RNA processing and mRNA degradation.

It localises to the cytoplasm. It carries out the reaction ATP + H2O = ADP + phosphate + H(+). Functionally, DEAD-box RNA helicase involved in RNA degradation. Has RNA-dependent ATPase activity and unwinds double-stranded RNA. The sequence is that of ATP-dependent RNA helicase RhlB from Citrobacter koseri (strain ATCC BAA-895 / CDC 4225-83 / SGSC4696).